The primary structure comprises 399 residues: Adenylate cyclase (399 aa).

Over residues 1 to 10 (MTVGDTTSGS) the composition is skewed to polar residues. Residues 1–35 (MTVGDTTSGSGEEPAADSSVHATPHHEVDHTVEPT) form a disordered region. Basic and acidic residues predominate over residues 24-33 (PHHEVDHTVE). Positions 198–307 (RVRFADLVGF…TTVNLASRLT (110 aa)) constitute a Guanylate cyclase domain. 2 residues coordinate Mg(2+): Asp-203 and Asp-247.

The protein belongs to the adenylyl cyclase class-3 family. Requires Mg(2+) as cofactor.

It carries out the reaction ATP = 3',5'-cyclic AMP + diphosphate. The sequence is that of Adenylate cyclase (cya) from Streptomyces griseus.